A 104-amino-acid polypeptide reads, in one-letter code: uncharacterized protein (104 aa).

Residues 58-71 (PERDRARRDRDHHP) are compositionally biased toward basic and acidic residues. The interval 58–84 (PERDRARRDRDHHPWSRSRSQLSPRMA) is disordered.

This is an uncharacterized protein from Mycobacterium tuberculosis (strain ATCC 25618 / H37Rv).